The chain runs to 159 residues: Single-stranded DNA-binding protein 2 (159 aa).

One can recognise an SSB domain in the interval 2–104; that stretch reads MNRVVLVGRL…VVAESVQFLE (103 aa). Positions 106–159 are disordered; sequence RNHAEGATSNNYQNEANYSNNNKTSSYRADTSQKSDSFANEGKPIDINPDDLPF. Positions 114–127 are enriched in low complexity; the sequence is SNNYQNEANYSNNN. Residues 128 to 143 are compositionally biased toward polar residues; sequence KTSSYRADTSQKSDSF.

Homotetramer.

The polypeptide is Single-stranded DNA-binding protein 2 (ssb2) (Listeria innocua serovar 6a (strain ATCC BAA-680 / CLIP 11262)).